Consider the following 92-residue polypeptide: Probable Fe(2+)-trafficking protein (92 aa).

This sequence belongs to the Fe(2+)-trafficking protein family.

Its function is as follows. Could be a mediator in iron transactions between iron acquisition and iron-requiring processes, such as synthesis and/or repair of Fe-S clusters in biosynthetic enzymes. The chain is Probable Fe(2+)-trafficking protein from Xanthomonas oryzae pv. oryzae (strain MAFF 311018).